The primary structure comprises 268 residues: Urease accessory protein UreD (268 aa).

The protein belongs to the UreD family. As to quaternary structure, ureD, UreF and UreG form a complex that acts as a GTP-hydrolysis-dependent molecular chaperone, activating the urease apoprotein by helping to assemble the nickel containing metallocenter of UreC. The UreE protein probably delivers the nickel.

The protein localises to the cytoplasm. Functionally, required for maturation of urease via the functional incorporation of the urease nickel metallocenter. This Lysinibacillus sphaericus (strain C3-41) protein is Urease accessory protein UreD.